The following is a 468-amino-acid chain: PE family protein PE3 (468 aa).

Positions 1–92 constitute a PE domain; the sequence is MSYVIAAPEM…AGAAYAQAEA (92 aa). Residues 154 to 375 form the PE-PPE domain; it reads PVAQYTPEQW…DLRVLVDLGY (222 aa).

Belongs to the mycobacterial PE family.

It is found in the secreted. The protein resides in the cell wall. Plays significant roles in mycobacterial persistence during infection and modulates host immune response. The polypeptide is PE family protein PE3 (Mycobacterium tuberculosis (strain ATCC 25618 / H37Rv)).